A 222-amino-acid polypeptide reads, in one-letter code: GTP cyclohydrolase 1 (222 aa).

Residues Cys-111, His-114, and Cys-182 each contribute to the Zn(2+) site.

The protein belongs to the GTP cyclohydrolase I family. Toroid-shaped homodecamer, composed of two pentamers of five dimers.

It carries out the reaction GTP + H2O = 7,8-dihydroneopterin 3'-triphosphate + formate + H(+). It participates in cofactor biosynthesis; 7,8-dihydroneopterin triphosphate biosynthesis; 7,8-dihydroneopterin triphosphate from GTP: step 1/1. Its activity is regulated as follows. Allosteric enzyme. Activity is modulated by K(+), divalent cations, UTP, and tetrahydrobiopterin. Tetrahydrobiopterin is an inhibitor of this enzyme. The protein is GTP cyclohydrolase 1 of Salmonella typhi.